The following is a 219-amino-acid chain: Large ribosomal subunit protein mL67 (219 aa).

The protein belongs to the mitochondrion-specific ribosomal protein mL67 family.

The protein localises to the nucleus. It localises to the mitochondrion. Its function is as follows. Transcription factor involved in regulation of RNA polymerase II-dependent transcription. Also involved in regulation of mitochondrial DNA recombination, maintenance and repair, and generation of homoplasmic cells. This Kluyveromyces lactis (strain ATCC 8585 / CBS 2359 / DSM 70799 / NBRC 1267 / NRRL Y-1140 / WM37) (Yeast) protein is Large ribosomal subunit protein mL67 (MHR1).